Here is a 516-residue protein sequence, read N- to C-terminus: GMP synthase [glutamine-hydrolyzing] (516 aa).

Positions 6 to 198 (KVIIVDYGSQ…LFKIAGIKAD (193 aa)) constitute a Glutamine amidotransferase type-1 domain. Cys-83 (nucleophile) is an active-site residue. Catalysis depends on residues His-172 and Glu-174. Positions 199–391 (WSMSSFCERV…LGLPDFIVWR (193 aa)) constitute a GMPS ATP-PPase domain. Residue 227-233 (SGGIDST) coordinates ATP.

In terms of assembly, homodimer.

The enzyme catalyses XMP + L-glutamine + ATP + H2O = GMP + L-glutamate + AMP + diphosphate + 2 H(+). It functions in the pathway purine metabolism; GMP biosynthesis; GMP from XMP (L-Gln route): step 1/1. Catalyzes the synthesis of GMP from XMP. The polypeptide is GMP synthase [glutamine-hydrolyzing] (Oleidesulfovibrio alaskensis (strain ATCC BAA-1058 / DSM 17464 / G20) (Desulfovibrio alaskensis)).